A 378-amino-acid polypeptide reads, in one-letter code: MFMVVCSNLRRPGHVGAASAARNINWLISEGYTPPIRAMARPYVQAPEARPVPDERYPGSQQDRKDIATQTVRSSKPKDLRPPSPPTPSQTLNSSSLPPPMSDQDADPSLDVPTGVAMPYNIDWIFPRLRNPSKFWYVVSQFVVSAVGIFSKVVLMFLNKPRVYNRERLIQLITKRPKGIPLVTVSNHYSCFDDPGLWGCLPLGIVCNTYKIRWSMAAHDICFTNKLHSLFFMFGKCIPVVRGIGVYQDAINLCIEKAALGHWIHVFPEGKVNMDKEELRLKWGVGRIIYESPKIPIILPMWHEGMDDLLPNVEPYVIQRGKQVTLNVGQPLDLNDFILDLKKRQVPEPTARKLITDKIQEAFRDLRAETEKLHRERN.

At methionine 1–tyrosine 137 the chain is on the mitochondrial intermembrane side. The interval alanine 46–valine 112 is disordered. Over residues proline 51 to isoleucine 67 the composition is skewed to basic and acidic residues. Residues valine 138–leucine 158 lie within the membrane without spanning it. Residues asparagine 159–asparagine 378 are Mitochondrial intermembrane-facing. Residues histidine 188–aspartate 193 carry the HXXXXD motif motif.

It belongs to the taffazin family. As to quaternary structure, associates with multiple protein complexes. Association with large protein complexes occurs only in the presence of cardiolipin.

It is found in the mitochondrion outer membrane. Its subcellular location is the mitochondrion inner membrane. The protein localises to the mitochondrion. It localises to the mitochondrion membrane. The protein resides in the golgi apparatus membrane. It is found in the endoplasmic reticulum membrane. The enzyme catalyses 1'-[1,2-diacyl-sn-glycero-3-phospho],3'-[1-acyl-sn-glycero-3-phospho]-glycerol + a 1,2-diacyl-sn-glycero-3-phosphocholine = a cardiolipin + a 1-acyl-sn-glycero-3-phosphocholine. It carries out the reaction 1'-[1,2-di-(9Z,12Z-octadecadienoyl)-sn-glycero-3-phospho]-3'-[1-(9Z,12Z-octadecadienoyl)-sn-glycero-3-phospho]-glycerol + 1-hexadecanoyl-2-(9Z,12Z-octadecadienoyl)-sn-glycero-3-phosphocholine = 1',3'-bis-[1,2-di-(9Z,12Z-octadecadienoyl)-sn-glycero-3-phospho]-glycerol + 1-hexadecanoyl-sn-glycero-3-phosphocholine. It catalyses the reaction 1'-[1,2-di-(9Z,12Z-octadecadienoyl)-sn-glycero-3-phospho]-3'-[2-(9Z,12Z-octadecadienoyl)-sn-glycero-3-phospho]-glycerol + 1-hexadecanoyl-2-(9Z,12Z-octadecadienoyl)-sn-glycero-3-phosphocholine = 1',3'-bis-[1,2-di-(9Z,12Z-octadecadienoyl)-sn-glycero-3-phospho]-glycerol + 1-hexadecanoyl-sn-glycero-3-phosphocholine. The catalysed reaction is 1,2-di-(9Z,12Z-octadecadienoyl)-sn-glycero-3-phosphocholine + 1'-[1,2-di-(9Z,12Z-octadecadienoyl)-sn-glycero-3-phospho]-3'-[1-(9Z,12Z-octadecadienoyl)-sn-glycero-3-phospho]-glycerol = 1-(9Z,12Z)-octadecadienoyl-sn-glycero-3-phosphocholine + 1',3'-bis-[1,2-di-(9Z,12Z-octadecadienoyl)-sn-glycero-3-phospho]-glycerol. The enzyme catalyses 1-tetradecanoyl-sn-glycero-3-phosphocholine + 1',3'-bis-[1,2-di-(9Z,12Z-octadecadienoyl)-sn-glycero-3-phospho]-glycerol = 1-tetradecanoyl-2-(9Z,12Z-octadecadienoyl)-sn-glycero-3-phosphocholine + 1'-[1,2-di-(9Z,12Z-octadecadienoyl)-sn-glycero-3-phospho]-3'-[1-(9Z,12Z-octadecadienoyl)-sn-glycero-3-phospho]-glycerol. It carries out the reaction 1',3'-bis[1,2-di-(9Z-octadecenoyl)-sn-glycero-3-phospho]-glycerol + 1-nonadecanoyl-sn-glycero-3-phosphocholine = 1-nonadecanoyl-2-(9Z-octadecenoyl)-sn-glycero-3-phosphocholine + 1'-[1,2-di-(9Z-octadecenoyl)-sn-glycero-3-phospho]-3'-[1-(9Z-octadecenoyl)-sn-glycero-3-phospho]-glycerol. It catalyses the reaction a 1,2-diacyl-sn-glycero-3-phospho-(1'-sn-glycerol) + a 1-acyl-sn-glycero-3-phosphocholine = 1-acyl-sn-glycero-3-phospho-(1'-sn-glycerol) + a 1,2-diacyl-sn-glycero-3-phosphocholine. The catalysed reaction is 1-hexadecanoyl-2-(9Z,12Z-octadecadienoyl)-sn-glycero-3-phospho-(1'-sn-glycerol) + 1-hexadecanoyl-sn-glycero-3-phosphocholine = 1-hexadecanoyl-sn-glycero-3-phospho-(1'-sn-glycerol) + 1-hexadecanoyl-2-(9Z,12Z-octadecadienoyl)-sn-glycero-3-phosphocholine. The enzyme catalyses 1,2-di-(9Z-octadecenoyl)-sn-glycero-3-phospho-(1'-sn-glycerol) + 1-nonadecanoyl-sn-glycero-3-phosphocholine = 1-nonadecanoyl-2-(9Z-octadecenoyl)-sn-glycero-3-phosphocholine + 1-(9Z-octadecenoyl)-sn-glycero-3-phospho-(1'-sn-glycerol). It carries out the reaction a 1,2-diacyl-sn-glycero-3-phosphate + a 1-acyl-sn-glycero-3-phosphocholine = a 1-acyl-sn-glycero-3-phosphate + a 1,2-diacyl-sn-glycero-3-phosphocholine. It catalyses the reaction 1-hexadecanoyl-2-(9Z,12Z-octadecadienoyl)-sn-glycero-3-phosphate + 1-hexadecanoyl-sn-glycero-3-phosphocholine = 1-hexadecanoyl-2-(9Z,12Z-octadecadienoyl)-sn-glycero-3-phosphocholine + 1-hexadecanoyl-sn-glycero-3-phosphate. The catalysed reaction is 1-hexadecanoyl-2-(9Z,12Z-octadecadienoyl)-sn-glycero-3-phosphocholine + 1-(9Z-octadecenoyl)-sn-glycero-3-phosphate = 1-(9Z)-octadecenoyl-2-(9Z,12Z)-octadecadienoyl-sn-glycero-3-phosphate + 1-hexadecanoyl-sn-glycero-3-phosphocholine. The enzyme catalyses a 1-acyl-sn-glycero-3-phosphocholine + a 1,2-diacyl-sn-glycero-3-phosphoethanolamine = a 1-acyl-sn-glycero-3-phosphoethanolamine + a 1,2-diacyl-sn-glycero-3-phosphocholine. It carries out the reaction 1-hexadecanoyl-2-(9Z,12Z-octadecadienoyl)-sn-glycero-3-phosphoethanolamine + 1-hexadecanoyl-sn-glycero-3-phosphocholine = 1-hexadecanoyl-2-(9Z,12Z-octadecadienoyl)-sn-glycero-3-phosphocholine + 1-hexadecanoyl-sn-glycero-3-phosphoethanolamine. It catalyses the reaction 1,2-di-(9Z,12Z-octadecadienoyl)-sn-glycero-3-phosphoethanolamine + 1-tetradecanoyl-sn-glycero-3-phosphocholine = 1-(9Z,12Z-octadecadienoyl)-sn-glycero-3-phosphoethanolamine + 1-tetradecanoyl-2-(9Z,12Z-octadecadienoyl)-sn-glycero-3-phosphocholine. The catalysed reaction is 1'-[1,2-diacyl-sn-glycero-3-phospho],3'-[1-acyl-sn-glycero-3-phospho]-glycerol + a 1,2-diacyl-sn-glycero-3-phosphoethanolamine = a cardiolipin + a 1-acyl-sn-glycero-3-phosphoethanolamine. The enzyme catalyses 1-hexadecanoyl-2-(9Z,12Z-octadecadienoyl)-sn-glycero-3-phosphoethanolamine + 1'-[1,2-di-(9Z,12Z-octadecadienoyl)-sn-glycero-3-phospho]-3'-[1-(9Z,12Z-octadecadienoyl)-sn-glycero-3-phospho]-glycerol = 1',3'-bis-[1,2-di-(9Z,12Z-octadecadienoyl)-sn-glycero-3-phospho]-glycerol + 1-hexadecanoyl-sn-glycero-3-phosphoethanolamine. It carries out the reaction 1'-[1-(9Z,12Z-octadecadienoyl)-2-(9Z-octadecenoyl)-sn-glycero-3-phospho]-3'-[1-(9Z,12Z-octadecadienoyl)-sn-glycero-3-phospho]-glycerol + 1',3'-bis-[1,2-di-(9Z,12Z-octadecadienoyl)-sn-glycero-3-phospho]-glycerol = 1'-[1,2-di-(9Z,12Z-octadecadienoyl)-sn-glycero-3-phospho]-3'-[1-(9Z,12Z-octadecadienoyl)-2-(9Z-octadecenoyl)-sn-glycero-3-phospho]-glycerol + 1'-[1,2-di-(9Z,12Z-octadecadienoyl)-sn-glycero-3-phospho]-3'-[1-(9Z,12Z-octadecadienoyl)-sn-glycero-3-phospho]-glycerol. It catalyses the reaction 1,2-di-(9Z-hexadecenoyl)-sn-glycero-3-phosphocholine + 1-hexadecanoyl-sn-glycero-3-phosphocholine = 1-hexadecanoyl-2-(9Z-hexadecenoyl)-sn-glycero-3-phosphocholine + 1-(9Z-hexadecenoyl)-sn-glycero-3-phosphocholine. The catalysed reaction is 1,2-dioctadecanoyl-sn-glycero-3-phosphocholine + 1-hexadecanoyl-sn-glycero-3-phosphocholine = 1-hexadecanoyl-2-octadecanoyl-sn-glycero-3-phosphocholine + 1-octadecanoyl-sn-glycero-3-phosphocholine. The enzyme catalyses 1,2-di-(9Z-octadecenoyl)-sn-glycero-3-phosphocholine + 1-hexadecanoyl-sn-glycero-3-phosphocholine = 1-hexadecanoyl-2-(9Z-octadecenoyl)-sn-glycero-3-phosphocholine + 1-(9Z-octadecenoyl)-sn-glycero-3-phosphocholine. It carries out the reaction 1,2-di-(9Z,12Z-octadecadienoyl)-sn-glycero-3-phosphocholine + 1-(9Z-octadecenoyl)-sn-glycero-3-phosphocholine = 1-(9Z)-octadecenoyl-2-(9Z,12Z)-octadecadienoyl-sn-glycero-3-phosphocholine + 1-(9Z,12Z)-octadecadienoyl-sn-glycero-3-phosphocholine. It catalyses the reaction 1,2-di-(9Z,12Z,15Z-octadecatrienoyl)-sn-glycero-3-phosphocholine + 1-tetradecanoyl-sn-glycero-3-phosphocholine = 1-tetradecanoyl-2-(9Z,12Z,15Z-octadecatrienoyl)-sn-glycero-3-phosphocholine + 1-(9Z,12Z,15Z-octadecatrienoyl)-sn-glycero-3-phosphocholine. The catalysed reaction is 1-nonadecanoyl-sn-glycero-3-phosphocholine + 1-octadecanoyl-2-(9Z-octadecenoyl)-sn-glycero-3-phosphocholine = 1-nonadecanoyl-2-(9Z-octadecenoyl)-sn-glycero-3-phosphocholine + 1-octadecanoyl-sn-glycero-3-phosphocholine. The enzyme catalyses 1-(9Z)-octadecenoyl-2-octadecanoyl-sn-glycero-3-phosphocholine + 1-nonadecanoyl-sn-glycero-3-phosphocholine = 2-octadecanoyl-sn-glycero-3-phosphocholine + 1-nonadecanoyl-2-(9Z-octadecenoyl)-sn-glycero-3-phosphocholine. The protein operates within phospholipid metabolism. Its function is as follows. Acyltransferase required to remodel newly synthesized phospholipid cardiolipin (1',3'-bis-[1,2-diacyl-sn-glycero-3-phospho]-glycerol or CL), a key component of the mitochondrial inner membrane, with tissue specific acyl chains necessary for adequate mitochondrial function. Its role in cellular physiology is to improve mitochondrial performance. CL is critical for the coassembly of lipids and proteins in mitochondrial membranes. For instance, remodeling of the acyl groups of CL in the mitochondrial inner membrane affects the assembly and stability of respiratory chain complex IV and its supercomplex forms. Catalyzes the transacylation between phospholipids and lysophospholipids, with the highest rate being between phosphatidylcholine (1,2-diacyl-sn-glycero-3-phosphocholine or PC) and CL. Catalyzes both 1-acyl-sn-glycero-3-phosphocholine (lysophosphatidylcholine or LPC) reacylation and PC-CL transacylation, that means, it exchanges acyl groups between CL and PC by a combination of forward and reverse transacylations. Also catalyzes transacylations between other phospholipids such as phosphatidylethanolamine (1,2-diacyl-sn-glycero-3-phosphoethanolamine or PE) and CL, between PC and PE, and between PC and phosphatidate (1,2-diacyl-sn-glycero-3-phosphate or PA), although at lower rate. Not regiospecific, it transfers acyl groups into any of the sn-1 and sn-2 positions of the monolysocardiolipin (MLCL), which is an important prerequisite for uniformity and symmetry in CL acyl distribution. Cannot transacylate dilysocardiolipin (DLCL), thus, the role of MLCL is limited to that of an acyl acceptor. CoA-independent, it can reshuffle molecular species within a single phospholipid class. Redistributes fatty acids between MLCL, CL, and other lipids, which prolongs the half-life of CL. Its action is completely reversible, which allows for cyclic changes, such as fission and fusion or bending and flattening of the membrane. Hence, by contributing to the flexibility of the lipid composition, it plays an important role in the dynamics of mitochondria membranes. Essential for the final stage of spermatogenesis, spermatid individualization. Required for the initiation of mitophagy. In Drosophila melanogaster (Fruit fly), this protein is Tafazzin.